The chain runs to 141 residues: Hemoglobin subunit alpha-D (141 aa).

The region spanning 1–141 (VLTAEDRRLL…VADVLCEKYR (141 aa)) is the Globin domain. Heme b contacts are provided by Gln-58 and His-87.

Belongs to the globin family. Heterotetramer of two alpha chains and two beta chains. Red blood cells.

Its function is as follows. Involved in oxygen transport from the lung to the various peripheral tissues. The sequence is that of Hemoglobin subunit alpha-D from Drymarchon melanurus erebennus (Texas indigo snake).